Here is a 34-residue protein sequence, read N- to C-terminus: Photosystem I reaction center subunit XII (34 aa).

The chain crosses the membrane as a helical span at residues 9 to 29 (LIALSLIVVVHAGVLALRLGI).

This sequence belongs to the PsaM family.

Its subcellular location is the cellular thylakoid membrane. The sequence is that of Photosystem I reaction center subunit XII from Prochlorococcus marinus (strain MIT 9312).